Here is a 1123-residue protein sequence, read N- to C-terminus: Polyprotein of EF-Ts, chloroplastic (1123 aa).

The N-terminal 73 residues, 1 to 73, are a transit peptide targeting the chloroplast; the sequence is MTPVVHCSVG…SSARRPRTLS (73 aa). The segment at 68 to 141 is disordered; the sequence is RPRTLSAATV…MPPLNDEDLV (74 aa). Residues 94 to 103 show a composition bias toward acidic residues; that stretch reads TSEESSEDTA. The span at 106 to 119 shows a compositional bias: low complexity; it reads TAEASEQAEASTSS. Residues 143–212 form the S1 motif 1 domain; the sequence is GASFTGKVRS…ETGRISLTMR (70 aa). A disordered region spans residues 213–258; the sequence is TGGDYVKPKTETPKAASGGRNTTATTSRGSPRQTRERDEAKSMGET. Residues 231 to 244 show a composition bias toward polar residues; that stretch reads GRNTTATTSRGSPR. The span at 245–254 shows a compositional bias: basic and acidic residues; the sequence is QTRERDEAKS. The 69-residue stretch at 263 to 331 folds into the S1 motif 2 domain; that stretch reads GQFLDGVVKN…VRGQVTLTMK (69 aa). Disordered regions lie at residues 443-670 and 894-923; these read KTES…SEKT and VAAQTAAKAPPAAPPKDDKPEETAETEEKK. Residues 486-501 are compositionally biased toward polar residues; that stretch reads EGSVTTEPTEAASTEF. The span at 551-587 shows a compositional bias: low complexity; sequence SVASTESVTAVVEESAPVSSVAIEVPAPEASEASAQE. Over residues 630–639 the composition is skewed to acidic residues; it reads KPDEPEESLI. Composition is skewed to low complexity over residues 657–670 and 894–903; these read AAVPEEVAASSEKT and VAAQTAAKAP. Residues 908 to 923 are compositionally biased toward basic and acidic residues; sequence PKDDKPEETAETEEKK.

It belongs to the EF-Ts family. In terms of assembly, component of the chloroplast ribosome 30S and 70S subunits, as well as polysomes. Component of the chloroplast ribosome 70S subunit, and at low levels, present in polysomes. As to quaternary structure, associates transiently with chloroplast polysomes.

The protein localises to the plastid. Its subcellular location is the chloroplast. Functionally, associates with the EF-Tu.GDP complex and induces the exchange of GDP to GTP. It remains bound to the aminoacyl-tRNA.EF-Tu.GTP complex up to the GTP hydrolysis stage on the ribosome. In terms of biological role, binds to psbD and psbA 5'-untranslated regions (UTRs) in vitro. This chain is Polyprotein of EF-Ts, chloroplastic, found in Oryza sativa subsp. indica (Rice).